The chain runs to 443 residues: MRLSRYFLPVMKETPADAQIISHKLMLRAGMIRQTAAGIYAWLPLGLRVLRRIEKIIREEQARAGALELLMPTLQTADLWRESGRYDAYGPEMLRIKDRHNRELLYGPTNEEMITALIRDNLQSYRDLPRIFYHIQWKFRDEVRPRFGVMRGREFLMKDAYSFDIDETAGRHNYNRMFVAYLNSFSRLGLRAIPMQADTGPIGGDLSHEFIVLAPNGESDVFYHSNWEQPTRHIEADFDDPKALQSIVNDHISDYAATDEKRDPLREAQAGDKLRQSRGIEVGHIFFFGTKYSKPMGFTLPGPDGKPIPIQMGSYGIGISRLLGAIIEASHDDNGIIWPEAVAPYHVGLINLRIDDENCRAIADSLYQRLEAAGIDTLYDDRNERGGAKFATMDLIGLPWQVVIGPKGAEKGVVELKNRASGEKQTISVEDAFNLLTAGHQQR.

The protein belongs to the class-II aminoacyl-tRNA synthetase family. ProS type 2 subfamily. Homodimer.

The protein localises to the cytoplasm. It carries out the reaction tRNA(Pro) + L-proline + ATP = L-prolyl-tRNA(Pro) + AMP + diphosphate. Its function is as follows. Catalyzes the attachment of proline to tRNA(Pro) in a two-step reaction: proline is first activated by ATP to form Pro-AMP and then transferred to the acceptor end of tRNA(Pro). The sequence is that of Proline--tRNA ligase from Zymomonas mobilis subsp. mobilis (strain ATCC 10988 / DSM 424 / LMG 404 / NCIMB 8938 / NRRL B-806 / ZM1).